The primary structure comprises 329 residues: Protein PRY2 (329 aa).

An N-terminal signal peptide occupies residues 1 to 18 (MKFSKVSLLAASASVALS). Positions 122–131 (TSASATQDDV) are enriched in polar residues. The disordered stretch occupies residues 122–197 (TSASATQDDV…SSSDFSTSMV (76 aa)). Low complexity predominate over residues 132–190 (TTTLTSSTQPTSTTTPTTTTTSPTTTTSPTTTASPTTTASPTTATTTQSTASSTQSSSS). Residues 197-311 (VNEHNTKRAL…EWGDYIICSY (115 aa)) enclose the SCP domain.

Belongs to the CRISP family. O-glycosylated.

Its subcellular location is the secreted. In terms of biological role, secreted protein required for efficient export of lipids such as acetylated sterols. Acts in detoxification of hydrophobic compounds. This Saccharomyces cerevisiae (strain ATCC 204508 / S288c) (Baker's yeast) protein is Protein PRY2 (PRY2).